A 403-amino-acid polypeptide reads, in one-letter code: Phosphopentomutase (403 aa).

Mn(2+) contacts are provided by Asp13, Asp298, His303, Asp339, His340, and His351.

Belongs to the phosphopentomutase family. It depends on Mn(2+) as a cofactor.

Its subcellular location is the cytoplasm. The catalysed reaction is 2-deoxy-alpha-D-ribose 1-phosphate = 2-deoxy-D-ribose 5-phosphate. It catalyses the reaction alpha-D-ribose 1-phosphate = D-ribose 5-phosphate. It participates in carbohydrate degradation; 2-deoxy-D-ribose 1-phosphate degradation; D-glyceraldehyde 3-phosphate and acetaldehyde from 2-deoxy-alpha-D-ribose 1-phosphate: step 1/2. Its function is as follows. Isomerase that catalyzes the conversion of deoxy-ribose 1-phosphate (dRib-1-P) and ribose 1-phosphate (Rib-1-P) to deoxy-ribose 5-phosphate (dRib-5-P) and ribose 5-phosphate (Rib-5-P), respectively. This is Phosphopentomutase from Streptococcus pneumoniae (strain Hungary19A-6).